A 301-amino-acid chain; its full sequence is Large ribosomal subunit protein uL18z (301 aa).

This sequence belongs to the universal ribosomal protein uL18 family. In terms of assembly, component of the large ribosomal subunit (LSU). Expressed in seedlings, roots, stems, leaves, inflorescences and siliques.

The protein localises to the cytoplasm. Its subcellular location is the nucleus. It is found in the nucleolus. It localises to the nucleoplasm. Its function is as follows. Component of the ribosome, a large ribonucleoprotein complex responsible for the synthesis of proteins in the cell. The small ribosomal subunit (SSU) binds messenger RNAs (mRNAs) and translates the encoded message by selecting cognate aminoacyl-transfer RNA (tRNA) molecules. The large subunit (LSU) contains the ribosomal catalytic site termed the peptidyl transferase center (PTC), which catalyzes the formation of peptide bonds, thereby polymerizing the amino acids delivered by tRNAs into a polypeptide chain. The nascent polypeptides leave the ribosome through a tunnel in the LSU and interact with protein factors that function in enzymatic processing, targeting, and the membrane insertion of nascent chains at the exit of the ribosomal tunnel. Seems involved in the regulation of cell proliferation. Essential in leaf polarity establishment, probably having a role for translation in leaf dorsoventral patterning to specify leaf adaxial identity. The chain is Large ribosomal subunit protein uL18z from Arabidopsis thaliana (Mouse-ear cress).